The following is a 155-amino-acid chain: Fibroblast growth factor 1 (155 aa).

The propeptide occupies 1–15 (MAEGDITTFNAITES). Asn-33 provides a ligand contact to heparin. Residues 127-143 (KKNGASKKGSRTHYGQK) are heparin-binding.

This sequence belongs to the heparin-binding growth factors family.

Its subcellular location is the secreted. The protein resides in the cytoplasm. It localises to the cell cortex. The protein localises to the cytosol. It is found in the nucleus. Functionally, plays an important role in the regulation of cell survival, cell division, angiogenesis, cell differentiation and cell migration. Functions as a potent mitogen in vitro. Acts as a ligand for FGFR1 and integrins. Binds to FGFR1 in the presence of heparin leading to FGFR1 dimerization and activation via sequential autophosphorylation on tyrosine residues which act as docking sites for interacting proteins, leading to the activation of several signaling cascades. Binds to integrins. Its binding to integrins and subsequent ternary complex formation with integrins and FGFR1 are essential for FGF1 signaling. This chain is Fibroblast growth factor 1 (fgf1), found in Xenopus laevis (African clawed frog).